We begin with the raw amino-acid sequence, 369 residues long: Phenylalanine--tRNA ligase alpha subunit (369 aa).

Residue E269 participates in Mg(2+) binding.

Belongs to the class-II aminoacyl-tRNA synthetase family. Phe-tRNA synthetase alpha subunit type 1 subfamily. As to quaternary structure, tetramer of two alpha and two beta subunits. Mg(2+) serves as cofactor.

It is found in the cytoplasm. The enzyme catalyses tRNA(Phe) + L-phenylalanine + ATP = L-phenylalanyl-tRNA(Phe) + AMP + diphosphate + H(+). This Brucella canis (strain ATCC 23365 / NCTC 10854 / RM-666) protein is Phenylalanine--tRNA ligase alpha subunit.